Here is a 91-residue protein sequence, read N- to C-terminus: Small ribosomal subunit protein bS18 (91 aa).

Residues methionine 1 to arginine 21 are disordered. The segment covering glycine 12–arginine 21 has biased composition (basic residues).

Belongs to the bacterial ribosomal protein bS18 family. As to quaternary structure, part of the 30S ribosomal subunit. Forms a tight heterodimer with protein bS6.

In terms of biological role, binds as a heterodimer with protein bS6 to the central domain of the 16S rRNA, where it helps stabilize the platform of the 30S subunit. In Geotalea daltonii (strain DSM 22248 / JCM 15807 / FRC-32) (Geobacter daltonii), this protein is Small ribosomal subunit protein bS18.